Reading from the N-terminus, the 90-residue chain is Barrier-to-autointegration factor B (90 aa).

The protein belongs to the BAF family. In terms of assembly, homodimer. Interacts with nemp1a and nemp1b.

It is found in the nucleus. The protein localises to the chromosome. The protein resides in the nucleus envelope. Its subcellular location is the cytoplasm. Non-specific DNA-binding protein that plays key roles in mitotic nuclear reassembly, chromatin organization, DNA damage response, gene expression and intrinsic immunity against foreign DNA. Contains two non-specific double-stranded DNA (dsDNA)-binding sites which promote DNA cross-bridging. Plays a key role in nuclear membrane reformation at the end of mitosis by driving formation of a single nucleus in a spindle-independent manner. Transiently cross-bridges anaphase chromosomes via its ability to bridge distant DNA sites, leading to the formation of a dense chromatin network at the chromosome ensemble surface that limits membranes to the surface. Also acts as a negative regulator of innate immune activation by restricting CGAS activity toward self-DNA upon acute loss of nuclear membrane integrity. Outcompetes CGAS for DNA-binding, thereby preventing CGAS activation and subsequent damaging autoinflammatory responses. Also involved in DNA damage response; acts by inhibiting the ADP-ribosyltransferase activity of PARP1. Involved in the recognition of exogenous dsDNA in the cytosol: associates with exogenous dsDNA immediately after its appearance in the cytosol at endosome breakdown and is required to avoid autophagy. The polypeptide is Barrier-to-autointegration factor B (banf1-b) (Xenopus laevis (African clawed frog)).